Consider the following 436-residue polypeptide: UPF0597 protein DP0591 (436 aa).

The protein belongs to the UPF0597 family.

The polypeptide is UPF0597 protein DP0591 (Desulfotalea psychrophila (strain LSv54 / DSM 12343)).